Consider the following 634-residue polypeptide: Glutamate--tRNA ligase (634 aa).

The 'HIGH' region motif lies at 108–118 (PNPSGPLHIGH).

It belongs to the class-I aminoacyl-tRNA synthetase family. Glutamate--tRNA ligase type 2 subfamily.

The protein resides in the cytoplasm. The enzyme catalyses tRNA(Glu) + L-glutamate + ATP = L-glutamyl-tRNA(Glu) + AMP + diphosphate. Functionally, catalyzes the attachment of glutamate to tRNA(Glu) in a two-step reaction: glutamate is first activated by ATP to form Glu-AMP and then transferred to the acceptor end of tRNA(Glu). This is Glutamate--tRNA ligase from Methanoregula boonei (strain DSM 21154 / JCM 14090 / 6A8).